Reading from the N-terminus, the 219-residue chain is Proteasome subunit beta 2 (219 aa).

Positions 1-25 are cleaved as a propeptide — removed in mature form; by autocatalysis; the sequence is MAEWIAGGLEGPAGRGLDERVVRSG. The active-site Nucleophile is the Thr26.

Belongs to the peptidase T1B family. As to quaternary structure, the 20S proteasome core is composed of 14 alpha and 14 beta subunits that assemble into four stacked heptameric rings, resulting in a barrel-shaped structure. The two inner rings, each composed of seven catalytic beta subunits, are sandwiched by two outer rings, each composed of seven alpha subunits. The catalytic chamber with the active sites is on the inside of the barrel. Has a gated structure, the ends of the cylinder being occluded by the N-termini of the alpha-subunits. Is capped at one or both ends by the proteasome regulatory ATPase, PAN.

The protein localises to the cytoplasm. It carries out the reaction Cleavage of peptide bonds with very broad specificity.. Its activity is regulated as follows. The formation of the proteasomal ATPase PAN-20S proteasome complex, via the docking of the C-termini of PAN into the intersubunit pockets in the alpha-rings, triggers opening of the gate for substrate entry. Interconversion between the open-gate and close-gate conformations leads to a dynamic regulation of the 20S proteasome proteolysis activity. Its function is as follows. Component of the proteasome core, a large protease complex with broad specificity involved in protein degradation. The chain is Proteasome subunit beta 2 from Aeropyrum pernix (strain ATCC 700893 / DSM 11879 / JCM 9820 / NBRC 100138 / K1).